Consider the following 186-residue polypeptide: Phosphoheptose isomerase 1 (186 aa).

Positions 33 to 186 (LCECLKKGGK…TLCQIIDESF (154 aa)) constitute an SIS domain. Position 48-50 (48-50 (NGG)) interacts with substrate. Zn(2+)-binding residues include His57 and Glu61. Substrate contacts are provided by residues Glu61, 90 to 91 (ND), 116 to 118 (STS), Ser121, and Gln168. Residues Gln168 and His176 each coordinate Zn(2+).

It belongs to the SIS family. GmhA subfamily. In terms of assembly, homotetramer. Zn(2+) serves as cofactor.

Its subcellular location is the cytoplasm. It catalyses the reaction 2 D-sedoheptulose 7-phosphate = D-glycero-alpha-D-manno-heptose 7-phosphate + D-glycero-beta-D-manno-heptose 7-phosphate. The protein operates within carbohydrate biosynthesis; D-glycero-D-manno-heptose 7-phosphate biosynthesis; D-glycero-alpha-D-manno-heptose 7-phosphate and D-glycero-beta-D-manno-heptose 7-phosphate from sedoheptulose 7-phosphate: step 1/1. It participates in bacterial outer membrane biogenesis; LOS core biosynthesis. Catalyzes the isomerization of sedoheptulose 7-phosphate in D-glycero-D-manno-heptose 7-phosphate. In Campylobacter jejuni subsp. jejuni serotype O:2 (strain ATCC 700819 / NCTC 11168), this protein is Phosphoheptose isomerase 1 (gmhA1).